A 249-amino-acid chain; its full sequence is Small ribosomal subunit protein uS5 (249 aa).

Residues 1-14 are compositionally biased toward basic and acidic residues; the sequence is MSAEAPKRQFGDRR. Positions 1–29 are disordered; it reads MSAEAPKRQFGDRRRGGRRGGRRDGEEKG. The region spanning 71-134 is the S5 DRBM domain; it reads LKDDVMKIRS…VIAKLSIIPI (64 aa).

The protein belongs to the universal ribosomal protein uS5 family. Component of the small ribosomal subunit. Mature ribosomes consist of a small (40S) and a large (60S) subunit. The 40S subunit contains about 32 different proteins and 1 molecule of RNA (18S). The 60S subunit contains 45 different proteins and 3 molecules of RNA (25S, 5.8S and 5S).

It is found in the cytoplasm. In terms of biological role, component of the ribosome, a large ribonucleoprotein complex responsible for the synthesis of proteins in the cell. The small ribosomal subunit (SSU) binds messenger RNAs (mRNAs) and translates the encoded message by selecting cognate aminoacyl-transfer RNA (tRNA) molecules. The large subunit (LSU) contains the ribosomal catalytic site termed the peptidyl transferase center (PTC), which catalyzes the formation of peptide bonds, thereby polymerizing the amino acids delivered by tRNAs into a polypeptide chain. The nascent polypeptides leave the ribosome through a tunnel in the LSU and interact with protein factors that function in enzymatic processing, targeting, and the membrane insertion of nascent chains at the exit of the ribosomal tunnel. RPS2 is important for the assembly and function of the 40S ribosomal subunitand is nvolved in nucleolar processing of pre-18S ribosomal RNA and ribosome assembly. The protein is Small ribosomal subunit protein uS5 (RPS21) of Candida albicans (strain SC5314 / ATCC MYA-2876) (Yeast).